Here is a 396-residue protein sequence, read N- to C-terminus: Phosphoglycerate kinase (396 aa).

Substrate contacts are provided by residues 21 to 23 (DFN), R37, 60 to 63 (HLGR), R121, and R154. ATP is bound by residues K205, G296, E327, and 353 to 356 (GGDS).

This sequence belongs to the phosphoglycerate kinase family. Monomer.

It is found in the cytoplasm. The enzyme catalyses (2R)-3-phosphoglycerate + ATP = (2R)-3-phospho-glyceroyl phosphate + ADP. The protein operates within carbohydrate degradation; glycolysis; pyruvate from D-glyceraldehyde 3-phosphate: step 2/5. The sequence is that of Phosphoglycerate kinase from Anaeromyxobacter dehalogenans (strain 2CP-C).